A 127-amino-acid chain; its full sequence is Aspartate 1-decarboxylase (127 aa).

The Schiff-base intermediate with substrate; via pyruvic acid role is filled by serine 25. Serine 25 bears the Pyruvic acid (Ser) mark. Threonine 57 provides a ligand contact to substrate. Tyrosine 58 (proton donor) is an active-site residue. 73–75 (GAA) contributes to the substrate binding site.

It belongs to the PanD family. As to quaternary structure, heterooctamer of four alpha and four beta subunits. Pyruvate serves as cofactor. In terms of processing, is synthesized initially as an inactive proenzyme, which is activated by self-cleavage at a specific serine bond to produce a beta-subunit with a hydroxyl group at its C-terminus and an alpha-subunit with a pyruvoyl group at its N-terminus.

It is found in the cytoplasm. The enzyme catalyses L-aspartate + H(+) = beta-alanine + CO2. Its pathway is cofactor biosynthesis; (R)-pantothenate biosynthesis; beta-alanine from L-aspartate: step 1/1. Catalyzes the pyruvoyl-dependent decarboxylation of aspartate to produce beta-alanine. The sequence is that of Aspartate 1-decarboxylase from Staphylococcus aureus (strain bovine RF122 / ET3-1).